The following is an 807-amino-acid chain: DNA gyrase subunit B (807 aa).

The 115-residue stretch at 429–543 folds into the Toprim domain; the sequence is SELFIVEGDS…KGYLYIAQPP (115 aa). Mg(2+) is bound by residues E435, D508, and D510.

Belongs to the type II topoisomerase GyrB family. In terms of assembly, heterotetramer, composed of two GyrA and two GyrB chains. In the heterotetramer, GyrA contains the active site tyrosine that forms a transient covalent intermediate with DNA, while GyrB binds cofactors and catalyzes ATP hydrolysis. Requires Mg(2+) as cofactor. It depends on Mn(2+) as a cofactor. The cofactor is Ca(2+).

It is found in the cytoplasm. It catalyses the reaction ATP-dependent breakage, passage and rejoining of double-stranded DNA.. Functionally, a type II topoisomerase that negatively supercoils closed circular double-stranded (ds) DNA in an ATP-dependent manner to modulate DNA topology and maintain chromosomes in an underwound state. Negative supercoiling favors strand separation, and DNA replication, transcription, recombination and repair, all of which involve strand separation. Also able to catalyze the interconversion of other topological isomers of dsDNA rings, including catenanes and knotted rings. Type II topoisomerases break and join 2 DNA strands simultaneously in an ATP-dependent manner. The sequence is that of DNA gyrase subunit B from Rickettsia typhi (strain ATCC VR-144 / Wilmington).